Reading from the N-terminus, the 73-residue chain is Conotoxin Im14.3 (73 aa).

The first 17 residues, 1 to 17, serve as a signal peptide directing secretion; it reads MGVFRCCLAAALVVVCL. Positions 18-35 are excised as a propeptide; it reads SRMGGTEPLESNHEDERR. A disordered region spans residues 22–42; that stretch reads GTEPLESNHEDERRADDTSGD. The span at 27–38 shows a compositional bias: basic and acidic residues; it reads ESNHEDERRADD. The region spanning 44–73 is the ShKT domain; it reads CVDTNEDCVNWASTGQCEANPSYMRENCRK.

Contain 2 disulfide bonds. Expressed by the venom duct.

The protein localises to the secreted. Its function is as follows. Probable neurotoxin. The protein is Conotoxin Im14.3 of Conus imperialis (Imperial cone).